Here is a 122-residue protein sequence, read N- to C-terminus: Vitelline membrane protein 15a-3 (122 aa).

Positions 1 to 17 (MNKFIILALFAVAAASA) are cleaved as a signal peptide. A compositionally biased stretch (pro residues) spans 21-49 (YPPPPPKPYHAPPPPPHHAHPPPPPPPPA). 2 disordered regions span residues 21–63 (YPPP…APVV) and 103–122 (PAPAPHYRAPESDSFDQFEE). The VM domain occupies 69–109 (HAPHAKCGANLLVGCAPSVAHAPCVPLHGHGHGYPAPAPHY).

Belongs to the vitelline membrane protein family. As to expression, expressed in the middle and posterior regions of the follicle cells.

The protein localises to the secreted. This is Vitelline membrane protein 15a-3 from Aedes aegypti (Yellowfever mosquito).